The primary structure comprises 342 residues: S-adenosylmethionine:tRNA ribosyltransferase-isomerase (342 aa).

The protein belongs to the QueA family. Monomer.

The protein resides in the cytoplasm. It catalyses the reaction 7-aminomethyl-7-carbaguanosine(34) in tRNA + S-adenosyl-L-methionine = epoxyqueuosine(34) in tRNA + adenine + L-methionine + 2 H(+). It functions in the pathway tRNA modification; tRNA-queuosine biosynthesis. Transfers and isomerizes the ribose moiety from AdoMet to the 7-aminomethyl group of 7-deazaguanine (preQ1-tRNA) to give epoxyqueuosine (oQ-tRNA). The protein is S-adenosylmethionine:tRNA ribosyltransferase-isomerase of Streptococcus pyogenes serotype M6 (strain ATCC BAA-946 / MGAS10394).